Consider the following 173-residue polypeptide: Mesencephalic astrocyte-derived neurotrophic factor homolog (173 aa).

The signal sequence occupies residues 1 to 22; the sequence is MKTWYMVVVIGFLATLAQTSLA. 4 disulfides stabilise this stretch: C28–C114, C31–C103, C61–C72, and C148–C151.

It belongs to the ARMET family.

The protein resides in the secreted. Functionally, required during the maturation of the embryonic nervous system for maintenance of neuronal and cuticular connectivity. Essential for maintenance of dopaminergic neurons and dopamine levels. This is Mesencephalic astrocyte-derived neurotrophic factor homolog from Drosophila erecta (Fruit fly).